The chain runs to 210 residues: Redox-sensing transcriptional repressor Rex (210 aa).

The segment at residues Lys17–Phe56 is a DNA-binding region (H-T-H motif). Residue Gly91–Gly96 participates in NAD(+) binding.

The protein belongs to the transcriptional regulatory Rex family. Homodimer.

It localises to the cytoplasm. In terms of biological role, modulates transcription in response to changes in cellular NADH/NAD(+) redox state. This Clostridioides difficile (strain 630) (Peptoclostridium difficile) protein is Redox-sensing transcriptional repressor Rex.